Consider the following 449-residue polypeptide: Glucose-6-phosphate isomerase (449 aa).

Residue Glu290 is the Proton donor of the active site. Catalysis depends on residues His311 and Lys425.

The protein belongs to the GPI family.

It is found in the cytoplasm. It catalyses the reaction alpha-D-glucose 6-phosphate = beta-D-fructose 6-phosphate. Its pathway is carbohydrate biosynthesis; gluconeogenesis. The protein operates within carbohydrate degradation; glycolysis; D-glyceraldehyde 3-phosphate and glycerone phosphate from D-glucose: step 2/4. Its function is as follows. Catalyzes the reversible isomerization of glucose-6-phosphate to fructose-6-phosphate. In Clostridium tetani (strain Massachusetts / E88), this protein is Glucose-6-phosphate isomerase.